Reading from the N-terminus, the 324-residue chain is Testisin (324 aa).

Residues 1-21 (MGARGKTLVPLLVVVATAAMA) form the signal peptide. A propeptide spanning residues 22 to 54 (LQSTYLQVDPEKPELQEPDLLSGPCGHRTIPSR) is cleaved from the precursor. Intrachain disulfides connect Cys46-Cys167 and Cys80-Cys96. The Peptidase S1 domain maps to 55 to 296 (IVGGDDAELG…HYNWIQSTMI (242 aa)). Residues His95 and Asp147 each act as charge relay system in the active site. 3 N-linked (GlcNAc...) asparagine glycosylation sites follow: Asn170, Asn177, and Asn210. Intrachain disulfides connect Cys181/Cys254, Cys214/Cys233, and Cys244/Cys272. Residue Ser248 is the Charge relay system of the active site. The N-linked (GlcNAc...) asparagine glycan is linked to Asn283. Asn298 carries GPI-anchor amidated asparagine lipidation. Residues 299 to 324 (GLLRPDPVPLLLFLTLAWASSLLRPA) constitute a propeptide, removed in mature form.

Belongs to the peptidase S1 family. In terms of tissue distribution, testis.

The protein resides in the cell membrane. Could regulate proteolytic events associated with testicular germ cell maturation. The polypeptide is Testisin (Prss21) (Mus musculus (Mouse)).